A 1169-amino-acid chain; its full sequence is Integrin alpha-X (1169 aa).

The N-terminal stretch at 1–19 (MSCTWIAFLLLLGFVSCLG) is a signal peptide. The Extracellular segment spans residues 20–1116 (FNLDAEKLTH…EMYKVHNPVP (1097 aa)). 2 FG-GAP repeats span residues 23–78 (DAEK…NCEP) and 79–138 (ISLQ…QSQN). Cys-69 and Cys-76 are joined by a disulfide. An N-linked (GlcNAc...) asparagine glycan is attached at Asn-89. 2 cysteine pairs are disulfide-bonded: Cys-108–Cys-126 and Cys-116–Cys-146. The region spanning 152 to 330 (DIVFLIDGSG…DALKDIENQL (179 aa)) is the VWFA domain. Asp-158, Ser-160, Ser-162, and Asp-260 together coordinate Mg(2+). N-linked (GlcNAc...) asparagine glycosylation occurs at Asn-267. 5 FG-GAP repeats span residues 341 to 392 (ETPS…PTFI), 393 to 444 (NMSQ…SRHW), 445 to 505 (RPKS…GSRW), 508 to 566 (GTTL…QDIA), and 571 to 631 (QRIS…FTPA). Asn-393 is a glycosylation site (N-linked (GlcNAc...) asparagine). Asp-467, Asp-469, Asp-471, and Asp-475 together coordinate Ca(2+). Cys-496 and Cys-507 are disulfide-bonded. Ca(2+) contacts are provided by Asp-531, Asn-533, Asp-535, Asp-539, Asp-594, Asp-598, and Asp-602. 2 disulfides stabilise this stretch: Cys-640/Cys-721 and Cys-656/Cys-711. A glycan (N-linked (GlcNAc...) asparagine) is linked at Asn-734. Disulfide bonds link Cys-770–Cys-776 and Cys-858–Cys-873. The N-linked (GlcNAc...) asparagine glycan is linked to Asn-949. 2 disulfide bridges follow: Cys-1007/Cys-1031 and Cys-1036/Cys-1041. 2 N-linked (GlcNAc...) asparagine glycosylation sites follow: Asn-1059 and Asn-1084. Residues 1117 to 1137 (LIVGSSVGGLLLLAIITAILY) form a helical membrane-spanning segment. The Cytoplasmic segment spans residues 1138 to 1169 (KAGFFKRQYKEMLEEANGQFVSDGTPTPQVAQ). Positions 1140–1144 (GFFKR) match the GFFKR motif motif.

Belongs to the integrin alpha chain family. As to quaternary structure, heterodimer of an alpha and a beta subunit. Alpha-X associates with beta-2.

It localises to the membrane. Its function is as follows. Integrin alpha-X/beta-2 is a receptor for fibrinogen. It recognizes the sequence G-P-R in fibrinogen. It mediates cell-cell interaction during inflammatory responses. It is especially important in monocyte adhesion and chemotaxis. The chain is Integrin alpha-X (Itgax) from Mus musculus (Mouse).